Reading from the N-terminus, the 324-residue chain is MKPSIILYKTLPDDLLHRLEAHFTVTQVPNLHPETVARHAQAFASAQGLLGASETVNRALLEKMPALRAASTISVGYDNVEVDALTARKIVLMHTPTVLTETVADTVMALMLATARRVVDVAERVKAGEWTESIGPAWFGVDVHHKTLGIVGMGRIGMALAQRAHFGFTMPVLYHARRRHQEAEDRFNARYCDLDTLLQEADFVCVILPLTAETRHLFGATQFARMKSSAIFINAGRGPVVDENALIAALQNGEIYAAGLDVFEQEPLSVDSPLLNMSNVVAVPHIGSATHETRYNMMACAVDNLIDALQGKIEKNCVNPQAAG.

Active-site residues include Arg-237 and Glu-266. Catalysis depends on His-285, which acts as the Proton donor.

Belongs to the D-isomer specific 2-hydroxyacid dehydrogenase family. GhrB subfamily. As to quaternary structure, homodimer.

Its subcellular location is the cytoplasm. It catalyses the reaction glycolate + NADP(+) = glyoxylate + NADPH + H(+). It carries out the reaction (R)-glycerate + NAD(+) = 3-hydroxypyruvate + NADH + H(+). The enzyme catalyses (R)-glycerate + NADP(+) = 3-hydroxypyruvate + NADPH + H(+). In terms of biological role, catalyzes the NADPH-dependent reduction of glyoxylate and hydroxypyruvate into glycolate and glycerate, respectively. The protein is Glyoxylate/hydroxypyruvate reductase B of Salmonella choleraesuis (strain SC-B67).